The following is a 353-amino-acid chain: uncharacterized protein (353 aa).

3 disordered regions span residues 1–24 (MSTS…QQSQ), 245–280 (NKSS…EKVP), and 305–353 (AAGK…DLNN). Positions 9 to 24 (NKKNNTKQQKYQQQSQ) are enriched in low complexity. The segment covering 254-280 (KSGDKSTVKSTDKQVEKKVEESSEKVP) has biased composition (basic and acidic residues). Low complexity predominate over residues 321 to 332 (VTTSTSESTVEV). Residues 342-353 (EPDEEVFEDLNN) show a composition bias toward acidic residues.

This is an uncharacterized protein from Acanthamoeba polyphaga mimivirus (APMV).